We begin with the raw amino-acid sequence, 969 residues long: Squamosa promoter-binding-like protein 6 (969 aa).

2 disordered regions span residues 1–25 and 54–81; these read MEAA…DMDR and EASG…VNAR. Residues 55–74 show a composition bias toward low complexity; it reads ASGLALNSSPSSSEEAGAAS. The segment at 149–226 adopts an SBP-type zinc-finger fold; the sequence is GPACQVEGCT…AGHNRRRRKT (78 aa). Residues cysteine 152, cysteine 157, cysteine 174, histidine 177, cysteine 193, cysteine 196, histidine 200, and cysteine 212 each contribute to the Zn(2+) site. Residues 209 to 225 carry the Bipartite nuclear localization signal motif; that stretch reads KRSCRRRLAGHNRRRRK. The disordered stretch occupies residues 377–434; the sequence is GMEGFEDGYEGSPTPAFKTTDSPNCPSWMHQDSTQSPPQTSGNSDSTSAQSLSSSNGD. Residues 393 to 419 are compositionally biased toward polar residues; the sequence is FKTTDSPNCPSWMHQDSTQSPPQTSGN. The span at 420–431 shows a compositional bias: low complexity; sequence SDSTSAQSLSSS.

Ubiquitous.

The protein localises to the nucleus. Functionally, trans-acting factor that binds specifically to the consensus nucleotide sequence 5'-TNCGTACAA-3'. The chain is Squamosa promoter-binding-like protein 6 (SPL6) from Oryza sativa subsp. japonica (Rice).